We begin with the raw amino-acid sequence, 100 residues long: UPF0213 protein YhbQ (100 aa).

Residues 2–77 (TPWFLYLIRT…KQLTKRQKER (76 aa)) form the GIY-YIG domain.

Belongs to the UPF0213 family.

This chain is UPF0213 protein YhbQ, found in Escherichia coli O81 (strain ED1a).